The primary structure comprises 319 residues: Putative protein phosphatase 2C 23 (319 aa).

In terms of domain architecture, PPM-type phosphatase spans 73 to 314 (AVRMESASCY…DDITVVVACI (242 aa)). Residues Gly-102, Asp-235, and Asp-305 each coordinate Mn(2+).

This sequence belongs to the PP2C family. Mg(2+) is required as a cofactor.

It carries out the reaction O-phospho-L-seryl-[protein] + H2O = L-seryl-[protein] + phosphate. It catalyses the reaction O-phospho-L-threonyl-[protein] + H2O = L-threonyl-[protein] + phosphate. The protein is Putative protein phosphatase 2C 23 of Oryza sativa subsp. japonica (Rice).